The chain runs to 139 residues: Holo-[acyl-carrier-protein] synthase (139 aa).

Residues Asp9 and Glu63 each coordinate Mg(2+).

This sequence belongs to the P-Pant transferase superfamily. AcpS family. Requires Mg(2+) as cofactor.

The protein localises to the cytoplasm. The catalysed reaction is apo-[ACP] + CoA = holo-[ACP] + adenosine 3',5'-bisphosphate + H(+). Functionally, transfers the 4'-phosphopantetheine moiety from coenzyme A to a Ser of acyl-carrier-protein. In Wigglesworthia glossinidia brevipalpis, this protein is Holo-[acyl-carrier-protein] synthase.